The following is a 463-amino-acid chain: Asparagine--tRNA ligase (463 aa).

It belongs to the class-II aminoacyl-tRNA synthetase family. Homodimer.

The protein resides in the cytoplasm. It carries out the reaction tRNA(Asn) + L-asparagine + ATP = L-asparaginyl-tRNA(Asn) + AMP + diphosphate + H(+). The chain is Asparagine--tRNA ligase from Bacillus cereus (strain ZK / E33L).